The sequence spans 430 residues: Major capsid protein (430 aa).

Residues 2–56 form a binding to the capsid assembly scaffolding protein region; that stretch reads ALNEGQIVTLAVDEIIETISAITPMAQKAKKYTPPAASMQRSSNTIWMPVEQESP. Residues 223–345 are i domain; the sequence is STATGITVSG…DAMAVNILNV (123 aa).

The protein belongs to the P22 phage major capsid protein family. Interacts (via N-terminus) with the capsid assembly scaffolding protein (via C-terminus); capsid proteins and scaffolding proteins form building blocks that assemble to form the procapsid. Interacts with the portal protein.

The protein localises to the virion. In terms of biological role, self-assembles to form an icosahedral capsid with a T=7 symmetry. In Salmonella phage P22 (Bacteriophage P22), this protein is Major capsid protein (5).